The sequence spans 457 residues: MEPWPLLLLFSLCSAGLVLGSEHETRLVAKLFKDYSSVVRPVEDHRQVVEVTVGLQLIQLINVDEVNQIVTTNVRLKQQWVDYNLKWNPDDYGGVKKIHIPSEKIWRPDLVLYNNADGDFAIVKFTKVLLQYTGHITWTPPAIFKSYCEIIVTHFPFDEQNCSMKLGTWTYDGSVVAINPESDQPDLSNFMESGEWVIKESRGWKHSVTYSCCPDTPYLDITYHFVMQRLPLYFIVNVIIPCLLFSFLTGLVFYLPTDSGEKMTLSISVLLSLTVFLLVIVELIPSTSSAVPLIGKYMLFTMVFVIASIIITVIVINTHHRSPSTHVMPNWVRKVFIDTIPNIMFFSTMKRPSREKQDKKIFTEDIDISDISGKPGPPPMGFHSPLIKHPEVKSAIEGIKYIAETMKSDQESNNAAAEWKYVAMVMDHILLGVFMLVCIIGTLAVFAGRLIELNQQG.

The first 20 residues, 1 to 20 (MEPWPLLLLFSLCSAGLVLG), serve as a signal peptide directing secretion. Residues 21–232 (SEHETRLVAK…YHFVMQRLPL (212 aa)) are Extracellular-facing. 2 disulfide bridges follow: C148/C162 and C212/C213. N-linked (GlcNAc...) asparagine glycosylation occurs at N161. Residues 233-253 (YFIVNVIIPCLLFSFLTGLVF) traverse the membrane as a helical segment. Residues 254-264 (YLPTDSGEKMT) are Cytoplasmic-facing. Residues 265-285 (LSISVLLSLTVFLLVIVELIP) traverse the membrane as a helical segment. Residues 286-296 (STSSAVPLIGK) are Extracellular-facing. A helical membrane pass occupies residues 297-317 (YMLFTMVFVIASIIITVIVIN). Residues 318-427 (THHRSPSTHV…EWKYVAMVMD (110 aa)) are Cytoplasmic-facing. A helical membrane pass occupies residues 428–448 (HILLGVFMLVCIIGTLAVFAG). Residues 449 to 457 (RLIELNQQG) are Extracellular-facing.

This sequence belongs to the ligand-gated ion channel (TC 1.A.9) family. Acetylcholine receptor (TC 1.A.9.1) subfamily. Alpha-1/CHRNA1 sub-subfamily. One of the alpha chains that assemble within the acetylcholine receptor, a pentamer of two alpha chains, a beta, a delta, and a gamma (in immature muscle) or epsilon (in mature muscle) chains. The muscle heteropentamer composed of alpha-1, beta-1, delta, epsilon subunits interacts with the alpha-conotoxin ImII. As to quaternary structure, is able to interact with other subunits of the acetylcholine receptor but is not assembled into functional acetylcholine-gated cation-selective channels. Isoform 1 is only expressed in skeletal muscle. Isoform 2 is constitutively expressed in skeletal muscle, brain, heart, kidney, liver, lung and thymus.

It localises to the postsynaptic cell membrane. The protein resides in the cell membrane. The enzyme catalyses K(+)(in) = K(+)(out). It catalyses the reaction Na(+)(in) = Na(+)(out). Upon acetylcholine binding, the AChR responds by an extensive change in conformation that affects all subunits and leads to opening of an ion-conducting channel across the plasma membrane. Functionally, non functional acetylcholine receptor alpha subunit which is not integrated into functional acetylcholine-gated cation-selective channels. This is Acetylcholine receptor subunit alpha from Homo sapiens (Human).